A 161-amino-acid polypeptide reads, in one-letter code: Cysteine dioxygenase (161 aa).

Fe cation is bound by residues His-75, His-77, and His-125.

It belongs to the cysteine dioxygenase family. It depends on Fe cation as a cofactor.

It catalyses the reaction L-cysteine + O2 = 3-sulfino-L-alanine + H(+). The chain is Cysteine dioxygenase (cdoA) from Bacillus subtilis (strain 168).